A 336-amino-acid polypeptide reads, in one-letter code: Glyceraldehyde-3-phosphate dehydrogenase 1 (336 aa).

NAD(+) contacts are provided by residues 13–14 and Asp-35; that span reads RI. Ser-59 bears the Phosphoserine mark. An NAD(+)-binding site is contributed by Arg-80. Phosphoserine is present on Ser-125. D-glyceraldehyde 3-phosphate contacts are provided by residues 151-153, Thr-182, 211-212, and Arg-234; these read SCT and TG. Catalysis depends on Cys-152, which acts as the Nucleophile. Asn-316 provides a ligand contact to NAD(+).

It belongs to the glyceraldehyde-3-phosphate dehydrogenase family. As to quaternary structure, homotetramer.

It is found in the cytoplasm. It catalyses the reaction D-glyceraldehyde 3-phosphate + phosphate + NAD(+) = (2R)-3-phospho-glyceroyl phosphate + NADH + H(+). It participates in carbohydrate degradation; glycolysis; pyruvate from D-glyceraldehyde 3-phosphate: step 1/5. This chain is Glyceraldehyde-3-phosphate dehydrogenase 1 (tdh1), found in Schizosaccharomyces pombe (strain 972 / ATCC 24843) (Fission yeast).